The following is a 209-amino-acid chain: A-type ATP synthase subunit D (209 aa).

It belongs to the V-ATPase D subunit family. In terms of assembly, has multiple subunits with at least A(3), B(3), C, D, E, F, H, I and proteolipid K(x).

It is found in the cell membrane. Functionally, component of the A-type ATP synthase that produces ATP from ADP in the presence of a proton gradient across the membrane. The protein is A-type ATP synthase subunit D of Methanosarcina acetivorans (strain ATCC 35395 / DSM 2834 / JCM 12185 / C2A).